We begin with the raw amino-acid sequence, 635 residues long: Threonine--tRNA ligase (635 aa).

The TGS domain occupies 1–61; it reads MVSIRLPDGS…DHDASLAIVT (61 aa). The catalytic stretch occupies residues 242–533; it reads DHRKLGKQLD…LIEHHAGAMP (292 aa). 3 residues coordinate Zn(2+): Cys-333, His-384, and His-510.

The protein belongs to the class-II aminoacyl-tRNA synthetase family. As to quaternary structure, homodimer. The cofactor is Zn(2+).

It localises to the cytoplasm. It catalyses the reaction tRNA(Thr) + L-threonine + ATP = L-threonyl-tRNA(Thr) + AMP + diphosphate + H(+). Functionally, catalyzes the attachment of threonine to tRNA(Thr) in a two-step reaction: L-threonine is first activated by ATP to form Thr-AMP and then transferred to the acceptor end of tRNA(Thr). Also edits incorrectly charged L-seryl-tRNA(Thr). This chain is Threonine--tRNA ligase, found in Burkholderia multivorans (strain ATCC 17616 / 249).